We begin with the raw amino-acid sequence, 246 residues long: DNA repair protein RecO (246 aa).

The protein belongs to the RecO family.

Its function is as follows. Involved in DNA repair and RecF pathway recombination. This Methylorubrum extorquens (strain PA1) (Methylobacterium extorquens) protein is DNA repair protein RecO.